Consider the following 345-residue polypeptide: Phosphate acyltransferase (345 aa).

Belongs to the PlsX family. In terms of assembly, homodimer. Probably interacts with PlsY.

Its subcellular location is the cytoplasm. It catalyses the reaction a fatty acyl-[ACP] + phosphate = an acyl phosphate + holo-[ACP]. It functions in the pathway lipid metabolism; phospholipid metabolism. Functionally, catalyzes the reversible formation of acyl-phosphate (acyl-PO(4)) from acyl-[acyl-carrier-protein] (acyl-ACP). This enzyme utilizes acyl-ACP as fatty acyl donor, but not acyl-CoA. In Wolbachia pipientis wMel, this protein is Phosphate acyltransferase.